The chain runs to 815 residues: Translation initiation factor IF-2 (815 aa).

One can recognise a tr-type G domain in the interval 315 to 482; the sequence is ARPPVVTIMG…AISLTAEVLE (168 aa). Residues 324–331 form a G1 region; that stretch reads GHVDHGKT. Residue 324-331 coordinates GTP; it reads GHVDHGKT. The tract at residues 349 to 353 is G2; it reads GITQH. The interval 370–373 is G3; sequence DTPG. GTP-binding positions include 370–374 and 424–427; these read DTPGH and NKID. The interval 424-427 is G4; it reads NKID. Residues 460–462 are G5; the sequence is SAY.

The protein belongs to the TRAFAC class translation factor GTPase superfamily. Classic translation factor GTPase family. IF-2 subfamily.

Its subcellular location is the cytoplasm. One of the essential components for the initiation of protein synthesis. Protects formylmethionyl-tRNA from spontaneous hydrolysis and promotes its binding to the 30S ribosomal subunits. Also involved in the hydrolysis of GTP during the formation of the 70S ribosomal complex. This is Translation initiation factor IF-2 from Ruthia magnifica subsp. Calyptogena magnifica.